The following is a 347-amino-acid chain: Phosphate acyltransferase (347 aa).

Belongs to the PlsX family. Homodimer. Probably interacts with PlsY.

It localises to the cytoplasm. The catalysed reaction is a fatty acyl-[ACP] + phosphate = an acyl phosphate + holo-[ACP]. It participates in lipid metabolism; phospholipid metabolism. Functionally, catalyzes the reversible formation of acyl-phosphate (acyl-PO(4)) from acyl-[acyl-carrier-protein] (acyl-ACP). This enzyme utilizes acyl-ACP as fatty acyl donor, but not acyl-CoA. This Dehalococcoides mccartyi (strain ATCC BAA-2100 / JCM 16839 / KCTC 5957 / BAV1) protein is Phosphate acyltransferase.